The following is a 173-amino-acid chain: Transcription factor E (173 aa).

In terms of domain architecture, HTH TFE/IIEalpha-type spans 9–92 (NNPATRAYIH…LWQLRIDLLY (84 aa)).

It belongs to the TFE family. Monomer. Interaction with RNA polymerase subunits RpoF and RpoE is necessary for Tfe stimulatory transcription activity. Able to interact with Tbp and RNA polymerase in the absence of DNA promoter. Interacts both with the preinitiation and elongation complexes.

In terms of biological role, transcription factor that plays a role in the activation of archaeal genes transcribed by RNA polymerase. Facilitates transcription initiation by enhancing TATA-box recognition by TATA-box-binding protein (Tbp), and transcription factor B (Tfb) and RNA polymerase recruitment. Not absolutely required for transcription in vitro, but particularly important in cases where Tbp or Tfb function is not optimal. It dynamically alters the nucleic acid-binding properties of RNA polymerases by stabilizing the initiation complex and destabilizing elongation complexes. Seems to translocate with the RNA polymerase following initiation and acts by binding to the non template strand of the transcription bubble in elongation complexes. This Methanoregula boonei (strain DSM 21154 / JCM 14090 / 6A8) protein is Transcription factor E.